The chain runs to 139 residues: Actin-depolymerizing factor 3 (139 aa).

Positions 5–139 constitute an ADF-H domain; sequence ASGMAVHDDC…DLDVFKSRAN (135 aa). Ser6 is subject to Phosphoserine.

Belongs to the actin-binding proteins ADF family.

It localises to the cytoplasm. It is found in the cytoskeleton. In terms of biological role, actin-depolymerizing protein. Severs actin filaments (F-actin) and binds to actin monomers. The chain is Actin-depolymerizing factor 3 (ADF3) from Arabidopsis thaliana (Mouse-ear cress).